The chain runs to 1091 residues: Sodium/potassium exporting P-type ATPase 2 (1091 aa).

The Cytoplasmic portion of the chain corresponds to 1–63 (MSEGTVKENN…LGDDTKIDYK (63 aa)). The chain crosses the membrane as a helical span at residues 64–84 (AMVLHQVCNAMIMVLVISMAI). Topologically, residues 85–90 (SFAVRD) are extracellular. A helical transmembrane segment spans residues 91–111 (WITGGVISFVIAVNVLIGLVQ). Topologically, residues 112–282 (EYKATKTMNS…TNVGTPLHRK (171 aa)) are cytoplasmic. The chain crosses the membrane as a helical span at residues 283 to 303 (LSKLAVLLFWIAVLFAIIVMA). Residues 304-312 (SQKFDVDKR) are Extracellular-facing. The helical transmembrane segment at 313 to 333 (VAIYAICVALSMIPSSLVVVL) threads the bilayer. The Cytoplasmic portion of the chain corresponds to 334–815 (TITMSVGAAV…RRMTDNIQKF (482 aa)). The active-site 4-aspartylphosphate intermediate is aspartate 369. Mg(2+) contacts are provided by aspartate 369 and threonine 371. Residues threonine 371 and glutamate 483 each contribute to the ATP site. The tract at residues 499–525 (ALTGEKSTNQSNENDQSSLSQHNEKPG) is disordered. Residues 503 to 519 (EKSTNQSNENDQSSLSQ) show a composition bias toward polar residues. 7 residues coordinate ATP: lysine 561, arginine 606, threonine 673, glycine 674, aspartate 675, arginine 732, and lysine 738. Aspartate 757 is a binding site for Mg(2+). Asparagine 760 is a binding site for ATP. The chain crosses the membrane as a helical span at residues 816–836 (VLQLLAENVAQALYLIIGLVF). Topologically, residues 837–848 (RDENGKSVFPLS) are extracellular. The helical transmembrane segment at 849–869 (PVEVLWIIVVTSCFPAMGLGL) threads the bilayer. The Cytoplasmic segment spans residues 870–885 (EKAAPDLMDRPPHDSE). The helical transmembrane segment at 886–906 (VGIFTWEVIIDTFAYGIIMTG) threads the bilayer. At 907–943 (SCMASFTGSLYGINSGRLGHDCDGTYNSSCRDVYRSR) the chain is on the extracellular side. A helical membrane pass occupies residues 944-964 (SAAFATMTWCALILAWEVVDM). The Cytoplasmic segment spans residues 965–991 (RRSFFRMHPDTDSPVKEFFRSIWGNQF). A helical membrane pass occupies residues 992-1012 (LFWSIIFGFVSAFPVVYIPVI). The Extracellular segment spans residues 1013–1021 (NDKVFLHKP). A helical membrane pass occupies residues 1022–1042 (IGAEWGLAIAFTIAFWIGAEL). The Cytoplasmic portion of the chain corresponds to 1043 to 1091 (YKCGKRRYFKTQRAHNPENDLESNNKRDPFEAYSTSTTIHTEVNIGIKQ).

The protein belongs to the cation transport ATPase (P-type) (TC 3.A.3) family. Type IID subfamily. Mg(2+) is required as a cofactor. In terms of processing, the active site is phosphorylated in presence of sodium or potassium and in conditions of higher pH. Not phosphorylated in presence of calcium ions.

The protein localises to the cell membrane. It carries out the reaction Na(+)(in) + ATP + H2O = Na(+)(out) + ADP + phosphate + H(+). The enzyme catalyses K(+)(in) + ATP + H2O = K(+)(out) + ADP + phosphate + H(+). Functionally, catalyzes the hydrolysis of ATP coupled with the export of sodium and potassium from the cell. May export potassium less efficiently. May transport other cations such as lithium. Sodium/potassium efflux ATPases are involved in salt tolerance and maintaining the membrane potential across the plasma membrane in high salinity (Na+) or alkaline (K+) environments. The chain is Sodium/potassium exporting P-type ATPase 2 from Saccharomyces cerevisiae (strain ATCC 204508 / S288c) (Baker's yeast).